Reading from the N-terminus, the 512-residue chain is Chlorogenic acid esterase (512 aa).

An N-terminal signal peptide occupies residues 1-18 (MLLRLCIIATLLVSHCVA). N-linked (GlcNAc...) asparagine glycans are attached at residues asparagine 47, asparagine 80, and asparagine 98. Cysteines 92 and 120 form a disulfide. Serine 230 acts as the Acyl-ester intermediate in catalysis. N-linked (GlcNAc...) asparagine glycosylation occurs at asparagine 271. A disulfide bridge connects residues cysteine 281 and cysteine 292. N-linked (GlcNAc...) asparagine glycans are attached at residues asparagine 295, asparagine 322, and asparagine 328. The Charge relay system role is filled by glutamate 351. N-linked (GlcNAc...) asparagine glycans are attached at residues asparagine 391 and asparagine 402. Histidine 416 acts as the Charge relay system in catalysis. N-linked (GlcNAc...) asparagine glycosylation occurs at asparagine 474.

Belongs to the type-B carboxylesterase/lipase family.

Its subcellular location is the secreted. The enzyme catalyses chlorogenate + H2O = L-quinate + (E)-caffeate + H(+). Its function is as follows. Extracellular chlorogenic acid esterase that releases caffeic acid from chlorogenic acid (CGA) contained in natural substrates such as apple marc and coffee pulp. Shows no activity towards 5-O-p-coumaroyl quinic acid, another quinic ester derivative, and rosmarinic acid, another caffeic ester derivative. The polypeptide is Chlorogenic acid esterase (Aspergillus niger).